The following is a 434-amino-acid chain: Enolase (434 aa).

A (2R)-2-phosphoglycerate-binding site is contributed by Gln-163. Glu-205 acts as the Proton donor in catalysis. Asp-242, Glu-291, and Asp-318 together coordinate Mg(2+). Lys-343, Arg-372, Ser-373, and Lys-394 together coordinate (2R)-2-phosphoglycerate. The active-site Proton acceptor is Lys-343.

This sequence belongs to the enolase family. Requires Mg(2+) as cofactor.

The protein resides in the cytoplasm. The protein localises to the secreted. Its subcellular location is the cell surface. The catalysed reaction is (2R)-2-phosphoglycerate = phosphoenolpyruvate + H2O. It participates in carbohydrate degradation; glycolysis; pyruvate from D-glyceraldehyde 3-phosphate: step 4/5. In terms of biological role, catalyzes the reversible conversion of 2-phosphoglycerate (2-PG) into phosphoenolpyruvate (PEP). It is essential for the degradation of carbohydrates via glycolysis. This chain is Enolase, found in Streptococcus intermedius.